Consider the following 326-residue polypeptide: MSHQLTFADSEFSTKRRQTRKEIFLSRMEQILPWQNMTAVIEPFYPKAGNGRRPYPLETMLRIHCMQHWYNLSDGAMEDALYEIASMRLFARLSLDSALPDRTTIMNFRHLLEQHQLARQLFKTINRWLAEAGVMMTQGTLVDATIIEAPSSTKNKEQQRDPEMHQTKKGNQWHFGMKAHIGVDAKSGLTHSLVTTAANEHDLNQLGNLLHGEEQFVSADAGYQGAPQREELAEVDVDWLIAERPGKVKTLKQNPRKNKTAINIEYMKASIRARVEHPFRIIKRQFGFVKARYKGLLKNDNQLAMLFTLANLFRVDQMIRQWERSQ.

Belongs to the transposase 11 family.

Involved in the transposition of the insertion sequence IS5. The chain is Transposase InsH for insertion sequence element IS5Y (insH5) from Escherichia coli (strain K12).